A 263-amino-acid chain; its full sequence is Calpain small subunit 1 (263 aa).

Position 1 is an N-acetylmethionine (Met-1). The residue at position 6 (Ser-6) is a Phosphoserine. The EF-hand 1; atypical domain occupies 91-125; that stretch reads EEVRQFRRLFAQLAGDDMEVSATELMNILNKVVTR. Residues Ala-104, Asp-107, Glu-109, Glu-114, Asp-132, Asp-147, Asp-149, Thr-151, Lys-153, and Glu-158 each contribute to the Ca(2+) site. EF-hand domains lie at 134–167, 164–199, 200–228, and 229–263; these read FGID…NNIK, NNIK…AGFR, LNEH…ISCL, and VRLD…TMYS. Residue Lys-174 is modified to N6-acetyllysine. The Ca(2+) site is built by Asp-177, Asp-179, Ser-181, Thr-183, Glu-188, and Asp-220.

In terms of assembly, homodimer or heterodimer of a large (catalytic) and a small (regulatory) subunit. In presence of calcium, the heterodimer dissociates.

The protein resides in the cytoplasm. Its subcellular location is the cell membrane. Regulatory subunit of the calcium-regulated non-lysosomal thiol-protease which catalyzes limited proteolysis of substrates involved in cytoskeletal remodeling and signal transduction. Essential for embryonic development. This is Calpain small subunit 1 (CAPNS1) from Bos taurus (Bovine).